The sequence spans 682 residues: Potassium-transporting ATPase ATP-binding subunit (682 aa).

4 helical membrane-spanning segments follow: residues 34 to 54, 62 to 82, 219 to 239, and 254 to 274; these read PVMF…IAMA, ALFS…ANFA, IALT…TATL, and VLVA…LSAI. Asp307 serves as the catalytic 4-aspartylphosphate intermediate. ATP contacts are provided by residues Asp344, Glu348, 377–384, and Lys395; that span reads FTAQSRMS. Mg(2+)-binding residues include Asp518 and Asp522. 3 helical membrane passes run 588–608, 616–636, and 656–676; these read FAII…LNIM, AILS…PLAL, and IYGL…DLLL.

The protein belongs to the cation transport ATPase (P-type) (TC 3.A.3) family. Type IA subfamily. The system is composed of three essential subunits: KdpA, KdpB and KdpC.

It localises to the cell inner membrane. The enzyme catalyses K(+)(out) + ATP + H2O = K(+)(in) + ADP + phosphate + H(+). Its function is as follows. Part of the high-affinity ATP-driven potassium transport (or Kdp) system, which catalyzes the hydrolysis of ATP coupled with the electrogenic transport of potassium into the cytoplasm. This subunit is responsible for energy coupling to the transport system and for the release of the potassium ions to the cytoplasm. This chain is Potassium-transporting ATPase ATP-binding subunit, found in Shigella boydii serotype 18 (strain CDC 3083-94 / BS512).